We begin with the raw amino-acid sequence, 123 residues long: Thioredoxin H-type 1 (123 aa).

An N-acetylalanine modification is found at Ala-2. The 118-residue stretch at 2-119 folds into the Thioredoxin domain; sequence AATAEVIPAG…IEAKLLKHSQ (118 aa). Cys-45 and Cys-48 are joined by a disulfide.

This sequence belongs to the thioredoxin family. Plant H-type subfamily.

It localises to the cytoplasm. In terms of biological role, participates in various redox reactions through the reversible oxidation of the active center dithiol to a disulfide. The H form is known to activate a number of cytosolic enzymes. This chain is Thioredoxin H-type 1 (THL-1), found in Brassica napus (Rape).